Consider the following 94-residue polypeptide: Small ribosomal subunit protein bS16 (94 aa).

Belongs to the bacterial ribosomal protein bS16 family.

The protein is Small ribosomal subunit protein bS16 of Thermosipho africanus (strain TCF52B).